We begin with the raw amino-acid sequence, 177 residues long: Ribosome maturation factor RimM (177 aa).

The region spanning G98–L171 is the PRC barrel domain.

It belongs to the RimM family. As to quaternary structure, binds ribosomal protein uS19.

It is found in the cytoplasm. In terms of biological role, an accessory protein needed during the final step in the assembly of 30S ribosomal subunit, possibly for assembly of the head region. Essential for efficient processing of 16S rRNA. May be needed both before and after RbfA during the maturation of 16S rRNA. It has affinity for free ribosomal 30S subunits but not for 70S ribosomes. This is Ribosome maturation factor RimM from Bdellovibrio bacteriovorus (strain ATCC 15356 / DSM 50701 / NCIMB 9529 / HD100).